We begin with the raw amino-acid sequence, 355 residues long: Phospho-N-acetylmuramoyl-pentapeptide-transferase (355 aa).

10 consecutive transmembrane segments (helical) span residues 14 to 34 (PTGTHLLILLTGLLFLLVVFF), 40 to 60 (LLIPLMATTLISAGLGCQVVP), 84 to 104 (GTPTMGGSFFVPVALIFALIW), 107 to 127 (FTPNVVAVALLTFVYMGIGWL), 147 to 167 (LILQITGAVLFCLWMLVNQVS), 176 to 196 (LVIPLGFFFWILAGFVLVAES), 205 to 225 (VDGLAGGTGAIAFLGLGIIIA), 227 to 247 (SHPDLAIFCTCFAGACLGFIF), 268 to 290 (ALAAVGLIAGHLWGLFLISGLFF), and 334 to 354 (TKIVGAFYLVNALLVVLAIWS).

It belongs to the glycosyltransferase 4 family. MraY subfamily. Mg(2+) serves as cofactor.

It is found in the cell inner membrane. The enzyme catalyses UDP-N-acetyl-alpha-D-muramoyl-L-alanyl-gamma-D-glutamyl-meso-2,6-diaminopimeloyl-D-alanyl-D-alanine + di-trans,octa-cis-undecaprenyl phosphate = di-trans,octa-cis-undecaprenyl diphospho-N-acetyl-alpha-D-muramoyl-L-alanyl-D-glutamyl-meso-2,6-diaminopimeloyl-D-alanyl-D-alanine + UMP. Its pathway is cell wall biogenesis; peptidoglycan biosynthesis. Functionally, catalyzes the initial step of the lipid cycle reactions in the biosynthesis of the cell wall peptidoglycan: transfers peptidoglycan precursor phospho-MurNAc-pentapeptide from UDP-MurNAc-pentapeptide onto the lipid carrier undecaprenyl phosphate, yielding undecaprenyl-pyrophosphoryl-MurNAc-pentapeptide, known as lipid I. The chain is Phospho-N-acetylmuramoyl-pentapeptide-transferase from Microcystis aeruginosa (strain NIES-843 / IAM M-2473).